A 407-amino-acid chain; its full sequence is Argininosuccinate synthase (407 aa).

ATP-binding positions include 16-24 (AYSGGLDTS) and A44. Residues Y96 and S101 each coordinate L-citrulline. Residue G126 participates in ATP binding. 3 residues coordinate L-aspartate: T128, N132, and D133. Residue N132 coordinates L-citrulline. L-citrulline is bound by residues R136, S185, S194, E270, and Y282.

It belongs to the argininosuccinate synthase family. Type 1 subfamily. In terms of assembly, homotetramer.

Its subcellular location is the cytoplasm. It carries out the reaction L-citrulline + L-aspartate + ATP = 2-(N(omega)-L-arginino)succinate + AMP + diphosphate + H(+). It participates in amino-acid biosynthesis; L-arginine biosynthesis; L-arginine from L-ornithine and carbamoyl phosphate: step 2/3. This Shewanella amazonensis (strain ATCC BAA-1098 / SB2B) protein is Argininosuccinate synthase.